Reading from the N-terminus, the 89-residue chain is Small ribosomal subunit protein uS15 (89 aa).

Positions 1 to 23 (MALTKERTASVVQQYGSGEKDTG) are disordered.

This sequence belongs to the universal ribosomal protein uS15 family. In terms of assembly, part of the 30S ribosomal subunit. Forms a bridge to the 50S subunit in the 70S ribosome, contacting the 23S rRNA.

One of the primary rRNA binding proteins, it binds directly to 16S rRNA where it helps nucleate assembly of the platform of the 30S subunit by binding and bridging several RNA helices of the 16S rRNA. In terms of biological role, forms an intersubunit bridge (bridge B4) with the 23S rRNA of the 50S subunit in the ribosome. This Treponema pallidum (strain Nichols) protein is Small ribosomal subunit protein uS15.